The following is a 139-amino-acid chain: Ribosome-binding factor A (139 aa).

Positions 112-139 are disordered; it reads EARTQGQAAPAPDVEPAPGAAPDDEAEE. A compositionally biased stretch (low complexity) spans 119–132; the sequence is AAPAPDVEPAPGAA.

The protein belongs to the RbfA family. Monomer. Binds 30S ribosomal subunits, but not 50S ribosomal subunits or 70S ribosomes.

The protein resides in the cytoplasm. In terms of biological role, one of several proteins that assist in the late maturation steps of the functional core of the 30S ribosomal subunit. Associates with free 30S ribosomal subunits (but not with 30S subunits that are part of 70S ribosomes or polysomes). Required for efficient processing of 16S rRNA. May interact with the 5'-terminal helix region of 16S rRNA. The polypeptide is Ribosome-binding factor A (Anaeromyxobacter dehalogenans (strain 2CP-1 / ATCC BAA-258)).